Here is a 61-residue protein sequence, read N- to C-terminus: Large ribosomal subunit protein eL37 (61 aa).

4 residues coordinate Zn(2+): Cys-19, Cys-22, Cys-34, and Cys-37. The C4-type zinc finger occupies Cys-19 to Cys-37.

Belongs to the eukaryotic ribosomal protein eL37 family. Zn(2+) serves as cofactor.

Functionally, binds to the 23S rRNA. The chain is Large ribosomal subunit protein eL37 from Sulfolobus acidocaldarius (strain ATCC 33909 / DSM 639 / JCM 8929 / NBRC 15157 / NCIMB 11770).